A 259-amino-acid chain; its full sequence is Small ribosomal subunit protein eS1 (259 aa).

The residue at position 2 (Ala2) is an N-acetylalanine; partial.

It belongs to the eukaryotic ribosomal protein eS1 family. As to quaternary structure, component of the small ribosomal subunit. Mature ribosomes consist of a small (40S) and a large (60S) subunit. The 40S subunit contains about 33 different proteins and 1 molecule of RNA (18S). The 60S subunit contains about 49 different proteins and 3 molecules of RNA (25S, 5.8S and 5S).

It is found in the cytoplasm. This is Small ribosomal subunit protein eS1 from Cryptococcus neoformans var. neoformans serotype D (strain B-3501A) (Filobasidiella neoformans).